Reading from the N-terminus, the 384-residue chain is Ribosomal RNA large subunit methyltransferase G (384 aa).

Belongs to the methyltransferase superfamily. RlmG family.

The protein localises to the cytoplasm. The catalysed reaction is guanosine(1835) in 23S rRNA + S-adenosyl-L-methionine = N(2)-methylguanosine(1835) in 23S rRNA + S-adenosyl-L-homocysteine + H(+). Its function is as follows. Specifically methylates the guanine in position 1835 (m2G1835) of 23S rRNA. The polypeptide is Ribosomal RNA large subunit methyltransferase G (Pseudoalteromonas atlantica (strain T6c / ATCC BAA-1087)).